Here is a 369-residue protein sequence, read N- to C-terminus: UPF0324 membrane protein DVU_0543 (369 aa).

9 helical membrane passes run 13-31 (IVPGLLVMVGTLYVLRTYV), 46-65 (WLVQVLSLNYILLSILTGMF), 110-132 (GGVAITLIVAFVFGTAIFIMWLG), 142-164 (TATMAAACGVCGVSAAVATAPGV), 171-193 (LALSIATILGFGIMTMFVSPFIG), 240-262 (WNVVRVICIPFVVFFITAWYWKG), 269-291 (TSLGSILASKFPIFVLGFVGMTA), 306-328 (LHLMRDVMAWIFGVGLVGLGAYI), and 341-363 (LRIGLIAGMVKYILALIIILAFI).

The protein belongs to the UPF0324 family.

Its subcellular location is the cell membrane. In Nitratidesulfovibrio vulgaris (strain ATCC 29579 / DSM 644 / CCUG 34227 / NCIMB 8303 / VKM B-1760 / Hildenborough) (Desulfovibrio vulgaris), this protein is UPF0324 membrane protein DVU_0543.